A 271-amino-acid polypeptide reads, in one-letter code: ATP-dependent Clp protease proteolytic subunit 6, chloroplastic (271 aa).

Residues 1-30 (MAGLAISPPLGLSFSSRTRNPKPTSFLSHN) are disordered. The transit peptide at 1 to 77 (MAGLAISPPL…KAPRFGVIEA (77 aa)) directs the protein to the chloroplast. Polar residues predominate over residues 13–30 (SFSSRTRNPKPTSFLSHN). Ser175 serves as the catalytic Nucleophile. His200 is a catalytic residue.

Belongs to the peptidase S14 family. As to quaternary structure, component of the chloroplastic Clp protease core complex which consist of at least 16 proteins: CLPP4 (3 copies), CLPP5 (3 copies), CLPR4 (2 copies), ClpP1 (1 copy), CLPP6 (1 copy), CLPR2 (1 copy), CLPT1 (1 copy), CLPT2 (1 copy) and 3 copies of CLPP3 and/or CLPR1 and/or CLPR3. The core complex is organized in two heptameric rings, one containing CLPP3,4,5,6 in a 1:2:3:1 ratio and the other CLPP1 and CLPR1,2,3,4 in a 3:1:1:1:1 ratio. As to expression, mostly expressed in leaves. Also detected in stems, and to a lower extent, in roots (at protein level).

The protein resides in the plastid. The protein localises to the chloroplast stroma. It catalyses the reaction Hydrolysis of proteins to small peptides in the presence of ATP and magnesium. alpha-casein is the usual test substrate. In the absence of ATP, only oligopeptides shorter than five residues are hydrolyzed (such as succinyl-Leu-Tyr-|-NHMec, and Leu-Tyr-Leu-|-Tyr-Trp, in which cleavage of the -Tyr-|-Leu- and -Tyr-|-Trp bonds also occurs).. Cleaves peptides in various proteins in a process that requires ATP hydrolysis. Has a chymotrypsin-like activity. Plays a major role in the degradation of misfolded proteins. Essential protein required for chloroplast development and integrity. This is ATP-dependent Clp protease proteolytic subunit 6, chloroplastic from Arabidopsis thaliana (Mouse-ear cress).